A 150-amino-acid polypeptide reads, in one-letter code: Large ribosomal subunit protein bL9 (150 aa).

This sequence belongs to the bacterial ribosomal protein bL9 family.

Binds to the 23S rRNA. This is Large ribosomal subunit protein bL9 from Burkholderia thailandensis (strain ATCC 700388 / DSM 13276 / CCUG 48851 / CIP 106301 / E264).